Reading from the N-terminus, the 370-residue chain is Coproporphyrin III ferrochelatase (370 aa).

The Fe-coproporphyrin III site is built by Ser58 and Tyr127. The Fe(2+) site is built by His189 and Glu276.

This sequence belongs to the ferrochelatase family.

The protein resides in the cytoplasm. It carries out the reaction Fe-coproporphyrin III + 2 H(+) = coproporphyrin III + Fe(2+). It participates in porphyrin-containing compound metabolism; protoheme biosynthesis. Its function is as follows. Involved in coproporphyrin-dependent heme b biosynthesis. Catalyzes the insertion of ferrous iron into coproporphyrin III to form Fe-coproporphyrin III. The protein is Coproporphyrin III ferrochelatase of Corynebacterium glutamicum (strain ATCC 13032 / DSM 20300 / JCM 1318 / BCRC 11384 / CCUG 27702 / LMG 3730 / NBRC 12168 / NCIMB 10025 / NRRL B-2784 / 534).